A 557-amino-acid polypeptide reads, in one-letter code: Dihydroxy-acid dehydratase 1 (557 aa).

Cysteine 50 provides a ligand contact to [2Fe-2S] cluster. Aspartate 82 contacts Mg(2+). Cysteine 123 is a binding site for [2Fe-2S] cluster. Positions 124 and 125 each coordinate Mg(2+). Lysine 125 is modified (N6-carboxylysine). A [2Fe-2S] cluster-binding site is contributed by cysteine 195. Glutamate 447 is a binding site for Mg(2+). Residue serine 473 is the Proton acceptor of the active site.

The protein belongs to the IlvD/Edd family. In terms of assembly, homodimer. [2Fe-2S] cluster serves as cofactor. Mg(2+) is required as a cofactor.

It catalyses the reaction (2R)-2,3-dihydroxy-3-methylbutanoate = 3-methyl-2-oxobutanoate + H2O. The catalysed reaction is (2R,3R)-2,3-dihydroxy-3-methylpentanoate = (S)-3-methyl-2-oxopentanoate + H2O. It functions in the pathway amino-acid biosynthesis; L-isoleucine biosynthesis; L-isoleucine from 2-oxobutanoate: step 3/4. Its pathway is amino-acid biosynthesis; L-valine biosynthesis; L-valine from pyruvate: step 3/4. Functions in the biosynthesis of branched-chain amino acids. Catalyzes the dehydration of (2R,3R)-2,3-dihydroxy-3-methylpentanoate (2,3-dihydroxy-3-methylvalerate) into 2-oxo-3-methylpentanoate (2-oxo-3-methylvalerate) and of (2R)-2,3-dihydroxy-3-methylbutanoate (2,3-dihydroxyisovalerate) into 2-oxo-3-methylbutanoate (2-oxoisovalerate), the penultimate precursor to L-isoleucine and L-valine, respectively. This Cupriavidus pinatubonensis (strain JMP 134 / LMG 1197) (Cupriavidus necator (strain JMP 134)) protein is Dihydroxy-acid dehydratase 1.